A 302-amino-acid chain; its full sequence is Phospho-N-acetylmuramoyl-pentapeptide-transferase (302 aa).

10 helical membrane passes run 1–21 (MIAA…NLFR), 42–62 (GTPT…GVLS), 67–87 (VILT…FLSI), 101–121 (ALLQ…ETAV), 123–143 (FFGI…IVIV), 154–174 (GLDG…WFFL), 178–198 (GFSE…LIFN), 204–224 (IFMG…VSVL), 229–249 (FYLI…ILQI), and 279–299 (IVAV…EVFG).

The protein belongs to the glycosyltransferase 4 family. MraY subfamily. Mg(2+) serves as cofactor.

It localises to the cell inner membrane. It catalyses the reaction UDP-N-acetyl-alpha-D-muramoyl-L-alanyl-gamma-D-glutamyl-meso-2,6-diaminopimeloyl-D-alanyl-D-alanine + di-trans,octa-cis-undecaprenyl phosphate = di-trans,octa-cis-undecaprenyl diphospho-N-acetyl-alpha-D-muramoyl-L-alanyl-D-glutamyl-meso-2,6-diaminopimeloyl-D-alanyl-D-alanine + UMP. The protein operates within cell wall biogenesis; peptidoglycan biosynthesis. Its function is as follows. Catalyzes the initial step of the lipid cycle reactions in the biosynthesis of the cell wall peptidoglycan: transfers peptidoglycan precursor phospho-MurNAc-pentapeptide from UDP-MurNAc-pentapeptide onto the lipid carrier undecaprenyl phosphate, yielding undecaprenyl-pyrophosphoryl-MurNAc-pentapeptide, known as lipid I. The polypeptide is Phospho-N-acetylmuramoyl-pentapeptide-transferase (Thermotoga neapolitana (strain ATCC 49049 / DSM 4359 / NBRC 107923 / NS-E)).